The chain runs to 517 residues: Golgi-associated kinase 1B (517 aa).

Residues 1 to 36 (MTCPDKPGQLVNWFVCSLCAPRVCKLWSSRRPRTRR) lie on the Cytoplasmic side of the membrane. A helical; Signal-anchor for type II membrane protein membrane pass occupies residues 37–56 (NLLLGTACAIYLGFLVSQVG). Residues 57 to 517 (RGSFQHGQAT…HGARVLPMNE (461 aa)) lie on the Extracellular side of the membrane. N-linked (GlcNAc...) asparagine glycans are attached at residues Asn-98 and Asn-287.

It belongs to the GASK family.

The protein resides in the golgi apparatus membrane. The sequence is that of Golgi-associated kinase 1B from Mus musculus (Mouse).